We begin with the raw amino-acid sequence, 542 residues long: Probable serine/threonine-protein kinase ndrB (542 aa).

The interval 1–52 (MNVERKLESLSLQQQQQEEQQDESEQPNQGVEDEEEEEYDEEEYEEEEEDIN) is disordered. Over residues 9–18 (SLSLQQQQQE) the composition is skewed to low complexity. The segment covering 19–51 (EQQDESEQPNQGVEDEEEEEYDEEEYEEEEEDI) has biased composition (acidic residues). Positions 130–437 (FESIRIIGRG…VEEIQSHPFF (308 aa)) constitute a Protein kinase domain. Residues 136-144 (IGRGAFGEV) and K159 contribute to the ATP site. D258 (proton acceptor) is an active-site residue. Positions 438-510 (KGVDWRRLRE…RNFDAMRDAF (73 aa)) constitute an AGC-kinase C-terminal domain. Residues 452–486 (IIPQLSSPTDTSNFDHYEEEQQPEPMQPVQSKSRR) are disordered. Positions 455-465 (QLSSPTDTSNF) are enriched in polar residues.

This sequence belongs to the protein kinase superfamily. AGC Ser/Thr protein kinase family.

Its subcellular location is the cytoplasm. The catalysed reaction is L-seryl-[protein] + ATP = O-phospho-L-seryl-[protein] + ADP + H(+). The enzyme catalyses L-threonyl-[protein] + ATP = O-phospho-L-threonyl-[protein] + ADP + H(+). This chain is Probable serine/threonine-protein kinase ndrB (ndrB), found in Dictyostelium discoideum (Social amoeba).